Reading from the N-terminus, the 241-residue chain is Small ribosomal subunit protein bS6 (241 aa).

Positions 97-108 (KPKIRERNRKYT) are enriched in basic residues. Positions 97-241 (KPKIRERNRK…YNNKKPQSSN (145 aa)) are disordered. A compositionally biased stretch (basic and acidic residues) spans 109-118 (LRRDRFDKPN). Low complexity-rich tracts occupy residues 130–151 (QDQQ…QASQ) and 161–182 (DDFQ…NQSG). The segment covering 183 to 193 (YHRENNRHNQE) has biased composition (basic and acidic residues). Residues 194 to 210 (NMHQNNKNHQNQTSQTQ) are compositionally biased toward low complexity.

This sequence belongs to the bacterial ribosomal protein bS6 family.

Binds together with bS18 to 16S ribosomal RNA. This is Small ribosomal subunit protein bS6 from Mesomycoplasma hyopneumoniae (strain J / ATCC 25934 / NCTC 10110) (Mycoplasma hyopneumoniae).